Consider the following 209-residue polypeptide: Mitochondrial import inner membrane translocase subunit Tim23 (209 aa).

3 consecutive transmembrane segments (helical) span residues 73 to 93 (FELAFFTIGGCCMTGAAFGAM), 125 to 145 (ALWANTLGSLALLYSAFGVII), and 181 to 197 (GLTGLTLTSLYALYNNW).

It belongs to the Tim17/Tim22/Tim23 family. As to quaternary structure, component of the TIM23 complex at least composed of TIMM23, TIMM17 (TIMM17A or TIMM17B) and TIMM50; within this complex, directly interacts with TIMM50. The complex interacts with the TIMM44 component of the PAM complex and with DNAJC15. Upon mitochondrial depolarization, interacts with PINK1; the interaction is required for PINK1 accumulation at the outer mitochondrial membrane, kinase activation by autophosphorylation and PRKN recruitement to mitochondria.

It is found in the mitochondrion inner membrane. Functionally, essential component of the TIM23 complex, a complex that mediates the translocation of transit peptide-containing proteins across the mitochondrial inner membrane. Has a role in the activation of stress-induced mitophagy by protecting PINK1 from OMA1-mediated degradation and facilitating its accumulation at the outer mitochondrial membrane in response to depolarization. The chain is Mitochondrial import inner membrane translocase subunit Tim23 (TIMM23) from Homo sapiens (Human).